Reading from the N-terminus, the 478-residue chain is Vitronectin (478 aa).

A signal peptide spans 1-19 (MAPLRPFFILALVAWVSLA). Residues 20–63 (DQESCKGRCTQGFMASKKCQCDELCTYYQSCCADYMEQCKPQVT) enclose the SMB domain. Intrachain disulfides connect cysteine 24/cysteine 28, cysteine 24/cysteine 40, cysteine 28/cysteine 58, cysteine 38/cysteine 40, cysteine 38/cysteine 51, cysteine 44/cysteine 50, and cysteine 51/cysteine 58. The Cell attachment site motif lies at 64–66 (RGD). Phosphothreonine is present on threonine 69. Sulfotyrosine occurs at positions 75, 78, and 80. Residues 82–153 (EEPKNNTNTG…QGTPEFPEEE (72 aa)) are disordered. N-linked (GlcNAc...) asparagine glycosylation is present at asparagine 86. Polar residues predominate over residues 86–99 (NNTNTGVQPENTSP). Basic and acidic residues predominate over residues 131-141 (EQQEEILRPDT). 3 Hemopexin repeats span residues 157 to 201 (GKPF…VWGI), 202 to 249 (EGPI…FSGI), and 250 to 304 (PDNV…FEHF). 2 N-linked (GlcNAc...) asparagine glycosylation sites follow: asparagine 168 and asparagine 241. 2 positions are modified to sulfotyrosine: tyrosine 278 and tyrosine 281. Cysteine 292 and cysteine 431 are disulfide-bonded. Serine 311 and serine 362 each carry phosphoserine. The disordered stretch occupies residues 359–395 (LSHSAQAKKQKSKRRSRKRYRSRRGRGHRRSQSSNSR). Over residues 364 to 389 (QAKKQKSKRRSRKRYRSRRGRGHRRS) the composition is skewed to basic residues. Positions 366-399 (KKQKSKRRSRKRYRSRRGRGHRRSQSSNSRRSSR) are heparin-binding. Serine 398 is modified (phosphoserine; by PKA). Residues tyrosine 416, tyrosine 419, and tyrosine 421 each carry the sulfotyrosine modification. One copy of the Hemopexin 4 repeat lies at 420-473 (DYDMDWLVPATCEPIQSVYFFSGDKYYRVNLRTRRVDSVNPPYPRSIAQYWLGC).

In terms of assembly, interacts with SERPINE1/PAI1, insulin and C1QBP. Sulfated on tyrosine residues. Post-translationally, N- and O-glycosylated. In terms of processing, it has been suggested that the active SMB domain may be permitted considerable disulfide bond heterogeneity or variability, thus two alternate disulfide patterns based on 3D structures are described with 1 disulfide bond conserved in both. Plasma.

The protein localises to the secreted. Its subcellular location is the extracellular space. Its function is as follows. Vitronectin is a cell adhesion and spreading factor found in serum and tissues. Vitronectin interact with glycosaminoglycans and proteoglycans. Is recognized by certain members of the integrin family and serves as a cell-to-substrate adhesion molecule. Inhibitor of the membrane-damaging effect of the terminal cytolytic complement pathway. The sequence is that of Vitronectin (Vtn) from Mus musculus (Mouse).